The primary structure comprises 93 residues: Islet amyloid polypeptide (93 aa).

The first 23 residues, 1 to 23 (MRCISRLPAVLLILSVALGHLRA), serve as a signal peptide directing secretion. Positions 24–35 (TPVGSGTNPQVD) are excised as a propeptide. A disulfide bridge connects residues Cys39 and Cys44. Tyrosine amide is present on Tyr74. A propeptide spanning residues 78-93 (NVAEDPNRESLDFLLL) is cleaved from the precursor.

The protein belongs to the calcitonin family. Can form homodimers. Interacts with IDE and INS. Interaction with INS inhibits homodimerization and fibril formation. In terms of tissue distribution, abundant in the islets of Langerhans but is not present in the brain or seven other tissues examined.

It localises to the secreted. Its function is as follows. Amylin/IAPP is a glucoregulatory peptide hormone that plays an important role in the regulation of energy homeostasis. Selectively inhibits insulin-stimulated glucose utilization and glycogen deposition in muscle, while not affecting adipocyte glucose metabolism. IAPP function is mediated by the CALCR-RAMPs (AMYRs) receptor complexes. Amylin can also bind CALCR receptor in the absence of RAMPs, although it is more selective for AMYRs. The protein is Islet amyloid polypeptide of Rattus norvegicus (Rat).